A 158-amino-acid chain; its full sequence is MALFHNPEERPYKLPDLCRTLDTTLHDVTIDCVYCRRQLQRTEVYEFAFSDLCVVYRDGVPFAACQSCIKFYAKIRELRYYSESVYATTLETITNTKLYNLLIRCMSCLKPLCPAEKLRHLTTKRRLHKIAGNFTGQCRHCWTSKREDRRRIRQETQV.

Zinc fingers lie at residues 32–68 and 105–141; these read CVYC…CQSC and CMSC…CRHC. Positions 156-158 match the PDZ-binding domain motif; that stretch reads TQV.

It belongs to the papillomaviridae E6 protein family. In terms of assembly, forms homodimers. Interacts with ubiquitin-protein ligase UBE3A/E6-AP and thus forms a complex with human TP53. Interacts with human NFX1 and MAGI3. Interacts with human IRF3; this interaction inhibits the establishment of antiviral state. Interacts with human TYK2; this interaction inhibits JAK-STAT activation by interferon alpha. Interacts with host DLG1; this interaction leads to the proteasomal degradation of DLG1.

It localises to the host cytoplasm. The protein localises to the host nucleus. In terms of biological role, plays a major role in the induction and maintenance of cellular transformation. Acts mainly as an oncoprotein by stimulating the destruction of many host cell key regulatory proteins. E6 associates with host UBE3A/E6-AP ubiquitin-protein ligase, and inactivates tumor suppressors TP53 and TP73 by targeting them to the 26S proteasome for degradation. In turn, DNA damage and chromosomal instabilities increase and lead to cell proliferation and cancer development. The complex E6/E6AP targets several other substrates to degradation via the proteasome including host DLG1 or NFX1, a repressor of human telomerase reverse transcriptase (hTERT). The resulting increased expression of hTERT prevents the shortening of telomere length leading to cell immortalization. Other cellular targets including BAK1, Fas-associated death domain-containing protein (FADD) and procaspase 8, are degraded by E6/E6AP causing inhibition of apoptosis. E6 also inhibits immune response by interacting with host IRF3 and TYK2. These interactions prevent IRF3 transcriptional activities and inhibit TYK2-mediated JAK-STAT activation by interferon alpha resulting in inhibition of the interferon signaling pathway. The protein is Protein E6 of Homo sapiens (Human).